The following is a 518-amino-acid chain: E3 ubiquitin-protein ligase TRIM39 (518 aa).

An RING-type zinc finger spans residues 29–70 (CSVCLEYLKEPVIIECGHNFCKACITRWWEDLERDFPCPVCR). Residues 102–143 (RDESLCPQHHEALSLFCYEDQEAVCLICAISHTHRAHTVVPL) form a B box-type zinc finger. Zn(2+) is bound by residues C107, H110, C129, and H135. Positions 181–250 (ELKRLVESRR…AHLAAEVEGK (70 aa)) form a coiled coil. 2 interaction with CDKN1A regions span residues 268-337 (KNIP…QLIA) and 389-518 (TSGR…TDWE). In terms of domain architecture, B30.2/SPRY spans 319–514 (SNFPRQYFAL…NAAPLTIRPP (196 aa)).

Belongs to the TRIM/RBCC family. Isoform 1 interacts with MOAP1. Isoform 1 and isoform 2 interact with CDKN1A. Isoform 2 interacts (via domain B box-type) with CACTIN. In terms of processing, autoubiquitinated. In terms of tissue distribution, ubiquitous; highly expressed in brain, heart, kidney, liver, skeletal muscle, spleen and testis.

Its subcellular location is the cytoplasm. It is found in the cytosol. The protein resides in the mitochondrion. The protein localises to the nucleus. It catalyses the reaction S-ubiquitinyl-[E2 ubiquitin-conjugating enzyme]-L-cysteine + [acceptor protein]-L-lysine = [E2 ubiquitin-conjugating enzyme]-L-cysteine + N(6)-ubiquitinyl-[acceptor protein]-L-lysine.. It functions in the pathway protein modification; protein ubiquitination. Functionally, E3 ubiquitin-protein ligase. May facilitate apoptosis by inhibiting APC/C-Cdh1-mediated poly-ubiquitination and subsequent proteasome-mediated degradation of the pro-apoptotic protein MOAP1. Regulates the G1/S transition of the cell cycle and DNA damage-induced G2 arrest by stabilizing CDKN1A/p21. Positively regulates CDKN1A/p21 stability by competing with DTL for CDKN1A/p21 binding, therefore disrupting DCX(DTL) E3 ubiquitin ligase complex-mediated CDKN1A/p21 ubiquitination and degradation. Regulates the G1/S transition of the cell cycle and DNA damage-induced G2 arrest by stabilizing CDKN1A/p21. Positively regulates CDKN1A/p21 stability by competing with DTL for CDKN1A/p21 binding, therefore disrupting DCX(DTL) E3 ubiquitin ligase complex-mediated CDKN1A/p21 ubiquitination and degradation. Negatively regulates the canonical NF-kappa-B signaling pathway via stabilization of CACTIN in an ubiquitination-independent manner. This chain is E3 ubiquitin-protein ligase TRIM39 (TRIM39), found in Homo sapiens (Human).